Reading from the N-terminus, the 481-residue chain is E3 ubiquitin-protein ligase makorin-1 (481 aa).

C3H1-type zinc fingers lie at residues 55–82 (WTKQVTCRYFMHGVCKEGDNCRYSHDLS), 84–111 (SPYGVVCKYFQRGYCVYGDRCRYEHSKP), and 208–235 (ETKKQLCPYAAVGECRYGENCVYLHGDS). Residues 236–263 (CDMCGLQVLHPVDAAQRSQHIKSCIEAH) are makorin-type Cys-His. An RING-type zinc finger spans residues 281–335 (CGICMEVVYEKANPSERRFGILSNCNHTYCLKCIRKWRSAKQFESKIIKSCPECR). Residues 364–393 (AMSNKACRYFDEGRGSCPFGGNCFYKHAYP) form a C3H1-type 4 zinc finger.

Interacts with p53/TP53 and CDKN1A. Interacts with TERT, modulating telomere length homeostasis. Auto-ubiquitinated; which leads to proteasomal degradation. Highly expressed in embryo, in specific cell types of the central nervous system, in brain with the strongest levels of expression in the mantle layers and in testis. Moderate to low levels in somatic tissues.

It carries out the reaction S-ubiquitinyl-[E2 ubiquitin-conjugating enzyme]-L-cysteine + [acceptor protein]-L-lysine = [E2 ubiquitin-conjugating enzyme]-L-cysteine + N(6)-ubiquitinyl-[acceptor protein]-L-lysine.. The protein operates within protein modification; protein ubiquitination. Functionally, E3 ubiquitin ligase catalyzing the covalent attachment of ubiquitin moieties onto substrate proteins. These substrates include FILIP1, p53/TP53, CDKN1A and TERT. Keeps cells alive by suppressing p53/TP53 under normal conditions, but stimulates apoptosis by repressing CDKN1A under stress conditions. Acts as a negative regulator of telomerase. Has negative and positive effects on RNA polymerase II-dependent transcription. The chain is E3 ubiquitin-protein ligase makorin-1 (Mkrn1) from Mus musculus (Mouse).